The following is a 232-amino-acid chain: Thiamine import ATP-binding protein ThiQ (232 aa).

The ABC transporter domain occupies leucine 2–isoleucine 230. Glycine 32–serine 39 lines the ATP pocket.

Belongs to the ABC transporter superfamily. Thiamine importer (TC 3.A.1.19.1) family. In terms of assembly, the complex is composed of two ATP-binding proteins (ThiQ), two transmembrane proteins (ThiP) and a solute-binding protein (ThiB).

Its subcellular location is the cell inner membrane. It catalyses the reaction thiamine(out) + ATP + H2O = thiamine(in) + ADP + phosphate + H(+). Part of the ABC transporter complex ThiBPQ involved in thiamine import. Responsible for energy coupling to the transport system. In Escherichia coli (strain UTI89 / UPEC), this protein is Thiamine import ATP-binding protein ThiQ.